Here is a 203-residue protein sequence, read N- to C-terminus: AFG2-interacting ribosome maturation factor (203 aa).

Part of the 55LCC heterohexameric ATPase complex composed at least of AIRIM, AFG2A, AFG2B and CINP. Does not associate with pre-60S ribosomal particles. In terms of processing, phosphorylated on serines by CK2 kinase.

It localises to the nucleus. Its subcellular location is the cytoplasm. Part of the 55LCC heterohexameric ATPase complex which is chromatin-associated and promotes replisome proteostasis to maintain replication fork progression and genome stability. Required for replication fork progression, sister chromatid cohesion, and chromosome stability. The ATPase activity is specifically enhanced by replication fork DNA and is coupled to cysteine protease-dependent cleavage of replisome substrates in response to replication fork damage. Uses ATPase activity to process replisome substrates in S-phase, facilitating their proteolytic turnover from chromatin to ensure DNA replication and mitotic fidelity. Involved in the cytoplasmic maturation steps of pre-60S ribosomal particles by promoting the release of shuttling protein RSL24D1/RLP24 from the pre-ribosomal particles. This is AFG2-interacting ribosome maturation factor from Homo sapiens (Human).